We begin with the raw amino-acid sequence, 152 residues long: Protein-export protein SecB (152 aa).

This sequence belongs to the SecB family. Homotetramer, a dimer of dimers. One homotetramer interacts with 1 SecA dimer.

The protein localises to the cytoplasm. One of the proteins required for the normal export of preproteins out of the cell cytoplasm. It is a molecular chaperone that binds to a subset of precursor proteins, maintaining them in a translocation-competent state. It also specifically binds to its receptor SecA. This chain is Protein-export protein SecB, found in Rickettsia felis (strain ATCC VR-1525 / URRWXCal2) (Rickettsia azadi).